A 374-amino-acid chain; its full sequence is Transcription factor IIIA (374 aa).

7 C2H2-type zinc fingers span residues 23–47 (FHCP…LRTH), 53–77 (FVCD…KRCH), 83–107 (FSCH…IEVH), 113–138 (YACT…SACH), 144–169 (YPCT…NRAH), 204–226 (PSCS…VVLH), and 236–261 (YHCP…SVIH). The segment at 267-291 (FHCDSCGTKFGYKHMLQRHLERGTC) adopts a C2H2-type 8; atypical zinc-finger fold. Residues 349 to 374 (YSCSFPECNYRFKRLYDMHRHLNSHH) form a C2H2-type 9 zinc finger.

The protein resides in the nucleus. In terms of biological role, is required for correct transcription of 5S RNA genes by RNA polymerase III. Also binds the transcribed 5S RNA's. Initiates transcription of the 5S ribosomal RNA gene. This chain is Transcription factor IIIA (sfc2), found in Schizosaccharomyces pombe (strain 972 / ATCC 24843) (Fission yeast).